The primary structure comprises 367 residues: Peptide chain release factor 2 (367 aa).

Gln254 carries the N5-methylglutamine modification.

Belongs to the prokaryotic/mitochondrial release factor family. In terms of processing, methylated by PrmC. Methylation increases the termination efficiency of RF2.

The protein localises to the cytoplasm. Its function is as follows. Peptide chain release factor 2 directs the termination of translation in response to the peptide chain termination codons UGA and UAA. The polypeptide is Peptide chain release factor 2 (Neisseria meningitidis serogroup B (strain ATCC BAA-335 / MC58)).